Reading from the N-terminus, the 379-residue chain is UDP-4-amino-4-deoxy-L-arabinose--oxoglutarate aminotransferase (379 aa).

K182 bears the N6-(pyridoxal phosphate)lysine mark.

This sequence belongs to the DegT/DnrJ/EryC1 family. ArnB subfamily. Homodimer. Pyridoxal 5'-phosphate serves as cofactor.

It carries out the reaction UDP-4-amino-4-deoxy-beta-L-arabinose + 2-oxoglutarate = UDP-beta-L-threo-pentopyranos-4-ulose + L-glutamate. Its pathway is nucleotide-sugar biosynthesis; UDP-4-deoxy-4-formamido-beta-L-arabinose biosynthesis; UDP-4-deoxy-4-formamido-beta-L-arabinose from UDP-alpha-D-glucuronate: step 2/3. The protein operates within bacterial outer membrane biogenesis; lipopolysaccharide biosynthesis. Functionally, catalyzes the conversion of UDP-4-keto-arabinose (UDP-Ara4O) to UDP-4-amino-4-deoxy-L-arabinose (UDP-L-Ara4N). The modified arabinose is attached to lipid A and is required for resistance to polymyxin and cationic antimicrobial peptides. The protein is UDP-4-amino-4-deoxy-L-arabinose--oxoglutarate aminotransferase of Sodalis glossinidius (strain morsitans).